A 376-amino-acid chain; its full sequence is MVGSRVYVGGLPYGVRERDLERFFKGYGRTRDILIKNGYGFVEFEDYRDADDAVYELNGKELLGERVVVEPARGTARGSNRDRYDDRYGGRRGGGGGRYNEKNKNSRSSSRYGPPLRTEYRLIVENLSSRVSWQDLKDYMRQAGEVTYADAHKQRRNEGVVEFASLSDMKTAIEKLDDTELNGRRIHLVEDRRGGRSGGGGGSGRGRSRSSSSRSRSRSRRRSRSRRSSHSRSKSRSRSKSRGGRSKSKSPVKSRSRSRSRSNKSRDVSKSKSKSHSRTRSRSPKRERDSRSRSRSVSKRESRSRSRSKSIHRDSRSRPPTVSFKSSFYKFTTMPFFCSDRSASAENKSRSRSRSRSASPKNGNASPDRNNESMDD.

Positions 4–74 constitute an RRM 1 domain; sequence SRVYVGGLPY…ERVVVEPARG (71 aa). Positions 73-114 are disordered; the sequence is RGTARGSNRDRYDDRYGGRRGGGGGRYNEKNKNSRSSSRYGP. Residues 79-89 are compositionally biased toward basic and acidic residues; the sequence is SNRDRYDDRYG. The region spanning 120–193 is the RRM 2 domain; that stretch reads YRLIVENLSS…RRIHLVEDRR (74 aa). Ser165 bears the Phosphoserine mark. A compositionally biased stretch (basic and acidic residues) spans 185–194; it reads RIHLVEDRRG. The segment at 185-376 is disordered; sequence RIHLVEDRRG…PDRNNESMDD (192 aa). The segment covering 196 to 205 has biased composition (gly residues); that stretch reads RSGGGGGSGR. Composition is skewed to basic residues over residues 215–263 and 271–283; these read SRSR…SRSN and SKSK…RSRS. Residues 284-304 are compositionally biased toward basic and acidic residues; sequence PKRERDSRSRSRSVSKRESRS.

Belongs to the splicing factor SR family. Extensively phosphorylated on serine residues in the RS domain.

It is found in the nucleus. Its function is as follows. Essential for development. May have a critical role in splicing or in controlling alternative splice site use of at least some pre-mRNA in vivo. Not required for all splicing. May play a general role in the condensation or decondensation of chromatin. In Drosophila melanogaster (Fruit fly), this protein is Serine-arginine protein 55 (B52).